The sequence spans 103 residues: Pyrimidine/purine nucleoside phosphorylase (103 aa).

The protein belongs to the nucleoside phosphorylase PpnP family.

The enzyme catalyses a purine D-ribonucleoside + phosphate = a purine nucleobase + alpha-D-ribose 1-phosphate. It carries out the reaction adenosine + phosphate = alpha-D-ribose 1-phosphate + adenine. The catalysed reaction is cytidine + phosphate = cytosine + alpha-D-ribose 1-phosphate. It catalyses the reaction guanosine + phosphate = alpha-D-ribose 1-phosphate + guanine. The enzyme catalyses inosine + phosphate = alpha-D-ribose 1-phosphate + hypoxanthine. It carries out the reaction thymidine + phosphate = 2-deoxy-alpha-D-ribose 1-phosphate + thymine. The catalysed reaction is uridine + phosphate = alpha-D-ribose 1-phosphate + uracil. It catalyses the reaction xanthosine + phosphate = alpha-D-ribose 1-phosphate + xanthine. In terms of biological role, catalyzes the phosphorolysis of diverse nucleosides, yielding D-ribose 1-phosphate and the respective free bases. Can use uridine, adenosine, guanosine, cytidine, thymidine, inosine and xanthosine as substrates. Also catalyzes the reverse reactions. This Sulfurovum sp. (strain NBC37-1) protein is Pyrimidine/purine nucleoside phosphorylase.